The sequence spans 360 residues: Probable cinnamyl alcohol dehydrogenase 6 (360 aa).

Cysteine 48 is a binding site for Zn(2+). Threonine 50 lines the NADP(+) pocket. Residues histidine 70, glutamate 71, cysteine 101, cysteine 104, cysteine 107, cysteine 115, and cysteine 164 each coordinate Zn(2+). NADP(+) is bound by residues threonine 168, 192–197 (GLGGLG), 215–220 (STSPAK), threonine 255, glycine 279, and 302–304 (SMT).

It belongs to the zinc-containing alcohol dehydrogenase family. Homodimer. Zn(2+) is required as a cofactor.

The enzyme catalyses (E)-cinnamyl alcohol + NADP(+) = (E)-cinnamaldehyde + NADPH + H(+). It carries out the reaction (E)-coniferol + NADP(+) = (E)-coniferaldehyde + NADPH + H(+). The catalysed reaction is (E)-sinapyl alcohol + NADP(+) = (E)-sinapaldehyde + NADPH + H(+). It catalyses the reaction (E)-4-coumaroyl alcohol + NADP(+) = (E)-4-coumaraldehyde + NADPH + H(+). The enzyme catalyses (E)-caffeyl alcohol + NADP(+) = (E)-caffeyl aldehyde + NADPH + H(+). It functions in the pathway aromatic compound metabolism; phenylpropanoid biosynthesis. Involved in lignin biosynthesis. Catalyzes the final step specific for the production of lignin monomers. Catalyzes the NADPH-dependent reduction of coniferaldehyde, 5-hydroxyconiferaldehyde, sinapaldehyde, 4-coumaraldehyde and caffeyl aldehyde to their respective alcohols. This Oryza sativa subsp. japonica (Rice) protein is Probable cinnamyl alcohol dehydrogenase 6.